The sequence spans 200 residues: Putative glucose-6-phosphate isomerase 2 (200 aa).

Fe cation-binding residues include His92, His94, Glu101, and His140.

The protein belongs to the archaeal-type GPI family. As to quaternary structure, homodimer. Fe cation serves as cofactor.

It localises to the cytoplasm. The catalysed reaction is alpha-D-glucose 6-phosphate = beta-D-fructose 6-phosphate. It functions in the pathway carbohydrate degradation; glycolysis; D-glyceraldehyde 3-phosphate and glycerone phosphate from D-glucose: step 2/4. The chain is Putative glucose-6-phosphate isomerase 2 (pgiA2) from Rhizobium meliloti (strain 1021) (Ensifer meliloti).